A 156-amino-acid polypeptide reads, in one-letter code: MPRKGPAPKHTVVVDPVYGSPLVTALVNKVLLSGKKSVAERIVYGALEGAKNKTGNDPVVTLKRALDNVKPTLEVRSRRVGGATYQVPVEVRAGRSTTLALRWIVGYSRARREKTMTERLMNELIDASNGLGASVKRREDTHKMAESNKAFAHYRW.

It belongs to the universal ribosomal protein uS7 family. Part of the 30S ribosomal subunit. Contacts proteins S9 and S11.

Functionally, one of the primary rRNA binding proteins, it binds directly to 16S rRNA where it nucleates assembly of the head domain of the 30S subunit. Is located at the subunit interface close to the decoding center, probably blocks exit of the E-site tRNA. This chain is Small ribosomal subunit protein uS7, found in Frankia casuarinae (strain DSM 45818 / CECT 9043 / HFP020203 / CcI3).